An 838-amino-acid chain; its full sequence is Leucine--tRNA ligase (838 aa).

The short motif at 38–48 (PYPSGKAHVGH) is the 'HIGH' region element. Residues 608-612 (KMSKS) carry the 'KMSKS' region motif. Position 611 (Lys-611) interacts with ATP.

It belongs to the class-I aminoacyl-tRNA synthetase family.

It localises to the cytoplasm. It carries out the reaction tRNA(Leu) + L-leucine + ATP = L-leucyl-tRNA(Leu) + AMP + diphosphate. This Orientia tsutsugamushi (strain Boryong) (Rickettsia tsutsugamushi) protein is Leucine--tRNA ligase.